Reading from the N-terminus, the 455-residue chain is Kynurenine--oxoglutarate transaminase 3 (455 aa).

Gly72 is a substrate binding site. Lys117 is modified (N6-acetyllysine; alternate). Lys117 bears the N6-succinyllysine; alternate mark. Asn219 lines the substrate pocket. At Lys281 the chain carries N6-(pyridoxal phosphate)lysine. Arg430 provides a ligand contact to substrate.

It belongs to the class-I pyridoxal-phosphate-dependent aminotransferase family. In terms of assembly, homodimer. Pyridoxal 5'-phosphate serves as cofactor. In terms of tissue distribution, widely expressed, with higher expression levels in liver, kidney, heart and neuroendocrine tissues.

It carries out the reaction L-kynurenine + 2-oxoglutarate = kynurenate + L-glutamate + H2O. It catalyses the reaction L-kynurenine + glyoxylate = kynurenate + glycine + H2O. The catalysed reaction is 3-hydroxy-L-kynurenine + glyoxylate = xanthurenate + glycine + H2O. The enzyme catalyses an S-substituted L-cysteine + H2O = a thiol + pyruvate + NH4(+). Its pathway is amino-acid degradation; L-kynurenine degradation; kynurenate from L-kynurenine: step 1/2. Its activity is regulated as follows. Kynurenine transamination is competitively inhibited by cysteine, glutamine, histidine, methionine, leucine, or phenylalanine. Catalyzes the irreversible transamination of the L-tryptophan metabolite L-kynurenine to form kynurenic acid (KA), an intermediate in the tryptophan catabolic pathway which is also a broad spectrum antagonist of the three ionotropic excitatory amino acid receptors among others. May catalyze the beta-elimination of S-conjugates and Se-conjugates of L-(seleno)cysteine, resulting in the cleavage of the C-S or C-Se bond. Has transaminase activity towards L-kynurenine, tryptophan, phenylalanine, serine, cysteine, methionine, histidine, glutamine and asparagine with glyoxylate as an amino group acceptor (in vitro). Has lower activity with 2-oxoglutarate as amino group acceptor (in vitro). In Mus musculus (Mouse), this protein is Kynurenine--oxoglutarate transaminase 3 (Kyat3).